A 793-amino-acid chain; its full sequence is Sucrose synthase (793 aa).

The interval 259–738 (MILNIAIISP…AIKRVTEKYS (480 aa)) is GT-B glycosyltransferase.

It belongs to the glycosyltransferase 1 family. In terms of assembly, homotetramer.

The catalysed reaction is an NDP-alpha-D-glucose + D-fructose = a ribonucleoside 5'-diphosphate + sucrose + H(+). Catalyzes the reversible conversion of sucrose and a nucleotide disphosphate (NDP) into fructose and NDP-glucose; although the reaction is freely reversible in vitro, the physiological reaction seems to be sucrose cleavage. Unlike characterized plant enzymes prefers ADP as a cosubstrate, whereas plants prefer UDP. Its preference for ADP over UDP suggests it may directly link sucrose and glycogen metabolism. This chain is Sucrose synthase, found in Melioribacter roseus (strain JCM 17771 / P3M-2).